A 1138-amino-acid polypeptide reads, in one-letter code: MNLNNLDGYEDSNRTLNNSLNYPTQKALSPSLKNMNYQDFLSITEREQPEALASGNTAINTVVSVTGATLSALGVPGASFITNFYLKIAGLLWPENGKIWDEFMTEVEALIDQKIEEYVRNKAIAELDGLGSALDKYQKALADWLGKQDDPEAILSVATEFRIIDSLFEFSMPSFKVTGYEIPLLTVYAQAANLHLALLRDSTLYGDKWGFTQNNIEENYNRQKKRISEYSDHCTKWYNSGLSRLNGSTYEQWINYNRFRREMILMALDLVAVFPFHDPRRYSMETSTQLTREVYTDPVSLSISNPDIGPSFSQMENTAIRTPHLVDYLDELYIYTSKYKAFSHEIQPDLFYWSAHKVSFKKSEQSNLYTTGIYGKTSGYISSGAYSFHGNDIYRTLAAPSVVVYPYTQNYGVEQVEFYGVKGHVHYRGDNKYDLTYDSIDQLPPDGEPIHEKYTHRLCHATAIFKSTPDYDNATIPIFSWTHRSAEYYNRIYPNKITKIPAVKMYKLDDPSTVVKGPGFTGGDLVKRGSTGYIGDIKATVNSPLSQKYRVRVRYATNVSGQFNVYINDKITLQTKFQNTVETIGEGKDLTYGSFGYIEYSTTIQFPDEHPKITLHLSDLSNNSSFYVDSIEFIPVDVNYAEKEKLEKAQKAVNTLFTEGRNALQKDVTDYKVDQVSILVDCISGDLYPNEKRELQNLVKYAKRLSYSRNLLLDPTFDSINSSEENGWYGSNGIVIGNGDFVFKGNYLIFSGTNDTQYPTYLYQKIDESKLKEYTRYKLKGFIESSQDLEAYVIRYDAKHRTLDVSDNLLPDILPENTCGEPNRCAAQQYLDENPSPECSSMQDGILSDSHSFSLNIDTGSINHNENLGIWVLFKISTLEGYAKFGNLEVIEDGPVIGEALARVKRQETKWRNKLAQLTTETQAIYTRAKQALDNLFANAQDSHLKRDVTFAEIAAARKIVQSIREAYMSWLSVVPGVNHPIFTELSGRVQRAFQLYDVRNVVRNGRFLNGLSDWIVTSDVKVQEENGNNVLVLNNWDAQVLQNVKLYQDRGYILHVTARKIGIGEGYITITDEEGHTDQLRFTACEEIDASNAFISGYITKELEFFPDTEKVHIEIGETEGIFLVESIELFLMEELC.

It belongs to the delta endotoxin family.

Its function is as follows. Promotes colloidosmotic lysis by binding to the midgut epithelial cells of Coleoptera. This protein is not toxic in its natural form. It is highly toxic to Colorado potato beetle larvae after an in vitro solubilization and trypsin activation step. This is Pesticidal crystal protein Cry7Aa (cry7Aa) from Bacillus thuringiensis.